A 254-amino-acid polypeptide reads, in one-letter code: Imidazole glycerol phosphate synthase subunit HisF (254 aa).

Catalysis depends on residues D12 and D132.

This sequence belongs to the HisA/HisF family. In terms of assembly, heterodimer of HisH and HisF.

The protein resides in the cytoplasm. It catalyses the reaction 5-[(5-phospho-1-deoxy-D-ribulos-1-ylimino)methylamino]-1-(5-phospho-beta-D-ribosyl)imidazole-4-carboxamide + L-glutamine = D-erythro-1-(imidazol-4-yl)glycerol 3-phosphate + 5-amino-1-(5-phospho-beta-D-ribosyl)imidazole-4-carboxamide + L-glutamate + H(+). It functions in the pathway amino-acid biosynthesis; L-histidine biosynthesis; L-histidine from 5-phospho-alpha-D-ribose 1-diphosphate: step 5/9. Functionally, IGPS catalyzes the conversion of PRFAR and glutamine to IGP, AICAR and glutamate. The HisF subunit catalyzes the cyclization activity that produces IGP and AICAR from PRFAR using the ammonia provided by the HisH subunit. The sequence is that of Imidazole glycerol phosphate synthase subunit HisF from Symbiobacterium thermophilum (strain DSM 24528 / JCM 14929 / IAM 14863 / T).